Here is a 923-residue protein sequence, read N- to C-terminus: Protein prickle (923 aa).

The segment at 1–196 is disordered; the sequence is MSYPYQKSHH…HPFHSPASAA (196 aa). Residues 11-34 show a composition bias toward low complexity; that stretch reads QTQQPQQNGHPQHQLMLQQQQQAD. Over residues 37-49 the composition is skewed to basic residues; the sequence is PHHHHHHHVHHAT. Composition is skewed to low complexity over residues 59–73 and 106–118; these read RSPLRSPQSPPLYSG and MPGMMPGQQPPGM. The span at 122-134 shows a compositional bias: gly residues; it reads LGGGGGGGGGGSA. Low complexity-rich tracts occupy residues 152–169 and 184–196; these read STVTNTSSTATNAPSARS and SSHHPFHSPASAA. One can recognise a PET domain in the interval 275 to 383; sequence GGGHNYSQSD…TVKQITTTLI (109 aa). 3 consecutive LIM zinc-binding domains span residues 382 to 446, 447 to 507, and 508 to 570; these read LICE…ETLK, PRCS…MFAE, and YCDY…GEPP. Disordered regions lie at residues 571 to 668 and 703 to 867; these read TPSD…LDLT and GPIA…SSAD. The segment covering 709 to 718 has biased composition (gly residues); the sequence is NGNGPTGGGP. The span at 738-748 shows a compositional bias: polar residues; sequence ESPSFSGTNSP. The segment covering 777 to 786 has biased composition (basic and acidic residues); the sequence is HSIKEVRFEG. A compositionally biased stretch (polar residues) spans 792-805; that stretch reads LPRTKSYCQRNGGQ. Over residues 817–827 the composition is skewed to acidic residues; the sequence is SDDDELAEDET. Residues 840–852 are compositionally biased toward basic and acidic residues; it reads QREQQRPVDDSDA. Residues 853 to 865 show a composition bias toward low complexity; sequence RSVCSTCSSSSSS.

It belongs to the prickle / espinas / testin family. Interacts with dsh; PET and LIM domains interact with dsh DEP domain, in wing cells. Interacts with Vang in photoreceptor cells.

The protein localises to the cell membrane. Acts in a planar cell polarity (PCP) complex; polarization along the apical/basal axis of epithelial cells. PCP signaling in the wing disk requires the receptor fz and the cytoplasmic proteins dsh and pk. These act in a feedback loop leading to activation of the jnk cascade and subsequent polarized arrangement of hairs and bristles. Dgo and pk compete with one another for dsh binding, thereby modulating fz dsh activity and ensuring tight control over fz PCP signaling. Vang, stan and pk function together to regulate the establishment of tissue polarity in the adult eye. The sequence is that of Protein prickle from Anopheles gambiae (African malaria mosquito).